Reading from the N-terminus, the 171-residue chain is Shikimate kinase (171 aa).

Residue 11 to 16 participates in ATP binding; the sequence is ATGKTT. Threonine 15 is a Mg(2+) binding site. Residues aspartate 33, arginine 57, and glycine 79 each contribute to the substrate site. Arginine 117 serves as a coordination point for ATP. Arginine 136 lines the substrate pocket.

It belongs to the shikimate kinase family. As to quaternary structure, monomer. Mg(2+) serves as cofactor.

The protein localises to the cytoplasm. It carries out the reaction shikimate + ATP = 3-phosphoshikimate + ADP + H(+). The protein operates within metabolic intermediate biosynthesis; chorismate biosynthesis; chorismate from D-erythrose 4-phosphate and phosphoenolpyruvate: step 5/7. In terms of biological role, catalyzes the specific phosphorylation of the 3-hydroxyl group of shikimic acid using ATP as a cosubstrate. The polypeptide is Shikimate kinase (Thermoanaerobacter pseudethanolicus (strain ATCC 33223 / 39E) (Clostridium thermohydrosulfuricum)).